A 101-amino-acid polypeptide reads, in one-letter code: UPF0473 protein LAF_0524 (101 aa).

This sequence belongs to the UPF0473 family.

This chain is UPF0473 protein LAF_0524, found in Limosilactobacillus fermentum (strain NBRC 3956 / LMG 18251) (Lactobacillus fermentum).